We begin with the raw amino-acid sequence, 264 residues long: Hemin import ATP-binding protein HmuV (264 aa).

In terms of domain architecture, ABC transporter spans 2–241 (IEVSGVSVRL…ETMLAVFGCA (240 aa)). An ATP-binding site is contributed by 34–41 (GPNGSGKT).

Belongs to the ABC transporter superfamily. Heme (hemin) importer (TC 3.A.1.14.5) family. In terms of assembly, the complex is composed of two ATP-binding proteins (HmuV), two transmembrane proteins (HmuU) and a solute-binding protein (HmuT).

The protein resides in the cell inner membrane. Its function is as follows. Part of the ABC transporter complex HmuTUV involved in hemin import. Responsible for energy coupling to the transport system. The chain is Hemin import ATP-binding protein HmuV from Rhizobium johnstonii (strain DSM 114642 / LMG 32736 / 3841) (Rhizobium leguminosarum bv. viciae).